A 409-amino-acid chain; its full sequence is Divalent metal cation transporter MntH (409 aa).

11 consecutive transmembrane segments (helical) span residues Leu19–Ala39, Ala46–Ile66, Trp98–Ile118, Leu122–Ile142, Leu155–Ser175, Ala196–His216, Ile241–Phe261, Ile290–Gly310, Phe320–Leu340, Ile348–Leu368, and Ile388–Leu408.

This sequence belongs to the NRAMP family.

It localises to the cell inner membrane. Functionally, h(+)-stimulated, divalent metal cation uptake system. The protein is Divalent metal cation transporter MntH of Yersinia enterocolitica serotype O:8 / biotype 1B (strain NCTC 13174 / 8081).